A 224-amino-acid chain; its full sequence is Octanoyltransferase (224 aa).

Positions 45-223 (PSNKQAVWML…SLNKRFGLLW (179 aa)) constitute a BPL/LPL catalytic domain. Residues 87–94 (RGGDVTHH), 154–156 (SIG), and 167–169 (GIA) each bind substrate. The active-site Acyl-thioester intermediate is Cys-185.

The protein belongs to the LipB family.

The protein localises to the cytoplasm. It carries out the reaction octanoyl-[ACP] + L-lysyl-[protein] = N(6)-octanoyl-L-lysyl-[protein] + holo-[ACP] + H(+). It participates in protein modification; protein lipoylation via endogenous pathway; protein N(6)-(lipoyl)lysine from octanoyl-[acyl-carrier-protein]: step 1/2. Catalyzes the transfer of endogenously produced octanoic acid from octanoyl-acyl-carrier-protein onto the lipoyl domains of lipoate-dependent enzymes. Lipoyl-ACP can also act as a substrate although octanoyl-ACP is likely to be the physiological substrate. This chain is Octanoyltransferase, found in Prochlorococcus marinus (strain SARG / CCMP1375 / SS120).